The sequence spans 342 residues: uncharacterized protein (342 aa).

The protein belongs to the cycloisomerase 2 family.

This is an uncharacterized protein from Staphylococcus epidermidis (strain ATCC 12228 / FDA PCI 1200).